A 191-amino-acid chain; its full sequence is dCTP deaminase (191 aa).

Residues 112-117 (KSTYAR), 136-138 (TLE), Q157, Y173, and Q183 contribute to the dCTP site. E138 (proton donor/acceptor) is an active-site residue.

It belongs to the dCTP deaminase family. In terms of assembly, homotrimer.

It carries out the reaction dCTP + H2O + H(+) = dUTP + NH4(+). Its pathway is pyrimidine metabolism; dUMP biosynthesis; dUMP from dCTP (dUTP route): step 1/2. Its function is as follows. Catalyzes the deamination of dCTP to dUTP. This chain is dCTP deaminase, found in Xylella fastidiosa (strain 9a5c).